Reading from the N-terminus, the 75-residue chain is uncharacterized protein (75 aa).

4Fe-4S ferredoxin-type domains are found at residues S2–G30 and D37–P68. 2 residues coordinate [3Fe-4S] cluster: C10 and C16. The [4Fe-4S] cluster site is built by C20, C46, C49, and C52. A [3Fe-4S] cluster-binding site is contributed by C56.

The cofactor is [4Fe-4S] cluster. It depends on [3Fe-4S] cluster as a cofactor.

It localises to the plastid. Its subcellular location is the chloroplast. This is an uncharacterized protein from Porphyra purpurea (Red seaweed).